A 40-amino-acid chain; its full sequence is Photosystem II reaction center protein J (40 aa).

The helical transmembrane segment at 8–28 (IPLWLVATVAGLAAIGVLGIF) threads the bilayer.

This sequence belongs to the PsbJ family. As to quaternary structure, PSII is composed of 1 copy each of membrane proteins PsbA, PsbB, PsbC, PsbD, PsbE, PsbF, PsbH, PsbI, PsbJ, PsbK, PsbL, PsbM, PsbT, PsbX, PsbY, PsbZ, Psb30/Ycf12, at least 3 peripheral proteins of the oxygen-evolving complex and a large number of cofactors. It forms dimeric complexes.

The protein localises to the plastid. Its subcellular location is the cyanelle thylakoid membrane. One of the components of the core complex of photosystem II (PSII). PSII is a light-driven water:plastoquinone oxidoreductase that uses light energy to abstract electrons from H(2)O, generating O(2) and a proton gradient subsequently used for ATP formation. It consists of a core antenna complex that captures photons, and an electron transfer chain that converts photonic excitation into a charge separation. This Cyanophora paradoxa protein is Photosystem II reaction center protein J.